The primary structure comprises 715 residues: Putative macrophage stimulating 1-like protein (715 aa).

The N-terminal stretch at 1 to 20 (MAPAPVTLLAPGAASSMSCS) is a signal peptide. Residues 21 to 110 (QPGQRSPSND…GRCDLFQEKG (90 aa)) form the PAN domain. 4 Kringle domains span residues 63 to 156 (GRCG…IKSC), 160 to 238 (ACVW…LPRC), 252 to 345 (SCFR…IRRC), and 353 to 464 (DCYH…LRRC). 12 disulfides stabilise this stretch: cysteine 127–cysteine 151, cysteine 161–cysteine 238, cysteine 182–cysteine 221, cysteine 210–cysteine 233, cysteine 253–cysteine 345, cysteine 316–cysteine 339, cysteine 354–cysteine 464, cysteine 375–cysteine 447, cysteine 511–cysteine 527, cysteine 606–cysteine 671, cysteine 636–cysteine 650, and cysteine 661–cysteine 689. Positions 488 to 713 (VAGGHPGNSP…FVDWIHKVMR (226 aa)) constitute a Peptidase S1 domain.

Belongs to the peptidase S1 family. Plasminogen subfamily.

Its subcellular location is the secreted. The sequence is that of Putative macrophage stimulating 1-like protein (MST1L) from Homo sapiens (Human).